The following is a 571-amino-acid chain: MYYMLIGFIIVVIAVIGAGYILKRKHYQRINELEEKKIKLRERPVIDELSKVKKLKLTGQTEALFESWRSSWDEIETRLFPDLEEVLLEAEMNTDRYKFRSATHAENDIEQMLVVIEKQMDQILGGLKELLISEEKNAKESRATKEKFAELRREVLTRGFKLGETLPYIETKLSELSESLNSYDSLTDQGDHLEAREIVIVVQKEMQVIEAQMERIPSLLHETDTILPEEMTKLRAGYEEMVRKGYYLAQMELDKEISRMKNQIDKMKKNVINLDLDEAEQGVEELHNEIDLFYDTLEHEAEARHFVKENHSPTSDKLQRQNAVSDALAEQITEVKQTYHVAEDDLAVYLKTSAKLSEAKENFEQLTALIASGEIAYSAAQDTLKEIDAALITISAEQDKFAEELRSLRKDELEARDDAERMRRAIITLDRKMERERLPGLPEEYLSLREHMGESINALEKRLEEKPLNMKAVSQDWRIAEEDLTHLTEKAEEMMENVRLVEHVIQYANRYRLRNKELADELVQAENHFYNDYQYKKALEIAVTALEKVETGAFKKVEKAYESKVSVDDIE.

Topologically, residues 1–3 (MYY) are extracellular. Residues 4-22 (MLIGFIIVVIAVIGAGYIL) traverse the membrane as a helical segment. Over 23 to 571 (KRKHYQRINE…ESKVSVDDIE (549 aa)) the chain is Cytoplasmic. Coiled-coil stretches lie at residues 248–298 (LAQM…DTLE), 326–374 (DALA…ASGE), 400–437 (KFAEELRSLRKDELEARDDAERMRRAIITLDRKMERER), and 478–529 (RIAE…ENHF).

The protein belongs to the EzrA family.

The protein localises to the cell membrane. Functionally, negative regulator of FtsZ ring formation; modulates the frequency and position of FtsZ ring formation. Inhibits FtsZ ring formation at polar sites. Interacts either with FtsZ or with one of its binding partners to promote depolymerization. The chain is Septation ring formation regulator EzrA from Listeria monocytogenes serotype 4b (strain CLIP80459).